Reading from the N-terminus, the 1234-residue chain is Coiled-coil domain-containing protein CG32809 (1234 aa).

The span at Met-1–Ser-11 shows a compositional bias: basic and acidic residues. Disordered stretches follow at residues Met-1–Gln-88, Lys-107–Asp-129, and Lys-330–Glu-350. Positions Ala-12–Ser-25 are enriched in low complexity. A compositionally biased stretch (basic and acidic residues) spans Gly-55–Arg-69. The stretch at His-412–Asn-436 forms a coiled coil. The tract at residues Asp-498–Leu-548 is disordered. Coiled coils occupy residues Glu-565–Gln-594 and Thr-630–Asn-666. 4 disordered regions span residues Glu-754–Gly-793, Ile-815–Ala-852, Leu-928–Gln-1011, and Ser-1028–Asn-1070. 5 stretches are compositionally biased toward low complexity: residues Gln-817–Gln-837, Thr-952–Ser-965, Thr-993–Ser-1004, Ser-1028–Ala-1039, and Val-1046–Ser-1068. Residues Val-1077 to Lys-1105 adopt a coiled-coil conformation.

This is Coiled-coil domain-containing protein CG32809 from Drosophila melanogaster (Fruit fly).